The sequence spans 260 residues: MELQLTGKESGWWIVSHENKLWLPKGELPQGNAANWSLQGATARQIGEWQGQPVWLIRQMMPSGMGSVRQLLDVDRGLFQLAGRGVQLAEFYRSHRFCGYCGHEMHASRTEWASLCNHCRERYYPQIAPCVIVAIRRGDEILLAQHVRHRGGINTVLAGFVEVGETLEQAVSREVLEESNIHIKNLRYVTSQPWPFPHSLMMAFMADYDSGELCHDPKELLNAGWYRYDQLPLLPPPGTVARRLIEDTVVLCREHSDLSQ.

Residues lysine 25 and arginine 69 each contribute to the substrate site. Zn(2+) is bound by residues cysteine 98 and cysteine 101. Glutamate 111 is a binding site for substrate. Zn(2+) contacts are provided by cysteine 116 and cysteine 119. Tyrosine 124 lines the substrate pocket. The 124-residue stretch at 125–248 folds into the Nudix hydrolase domain; the sequence is PQIAPCVIVA…TVARRLIEDT (124 aa). A divalent metal cation is bound by residues alanine 158, glutamate 174, and glutamate 178. Positions 159-180 match the Nudix box motif; that stretch reads GFVEVGETLEQAVSREVLEESN. 192–199 is a binding site for substrate; the sequence is QPWPFPHS. Glutamate 219 contributes to the a divalent metal cation binding site. Alanine 241 provides a ligand contact to substrate.

This sequence belongs to the Nudix hydrolase family. NudC subfamily. In terms of assembly, homodimer. Requires Mg(2+) as cofactor. It depends on Mn(2+) as a cofactor. The cofactor is Zn(2+).

The enzyme catalyses a 5'-end NAD(+)-phospho-ribonucleoside in mRNA + H2O = a 5'-end phospho-adenosine-phospho-ribonucleoside in mRNA + beta-nicotinamide D-ribonucleotide + 2 H(+). It catalyses the reaction NAD(+) + H2O = beta-nicotinamide D-ribonucleotide + AMP + 2 H(+). It carries out the reaction NADH + H2O = reduced beta-nicotinamide D-ribonucleotide + AMP + 2 H(+). Functionally, mRNA decapping enzyme that specifically removes the nicotinamide adenine dinucleotide (NAD) cap from a subset of mRNAs by hydrolyzing the diphosphate linkage to produce nicotinamide mononucleotide (NMN) and 5' monophosphate mRNA. The NAD-cap is present at the 5'-end of some mRNAs and stabilizes RNA against 5'-processing. Has preference for mRNAs with a 5'-end purine. Catalyzes the hydrolysis of a broad range of dinucleotide pyrophosphates. This is NAD-capped RNA hydrolase NudC from Yersinia pseudotuberculosis serotype O:1b (strain IP 31758).